The primary structure comprises 902 residues: Histone-lysine N-methyltransferase CLF (902 aa).

Residues 1-14 (MASEASPSSSATRS) are compositionally biased toward low complexity. Disordered stretches follow at residues 1 to 33 (MASEASPSSSATRSEPPKDSPAEERGPASKEVS), 73 to 107 (SMERGGSCKDGSDLLVKRQRDSPGMKSGIDESNNN), and 335 to 522 (GKTG…FMGE). Basic and acidic residues-rich tracts occupy residues 15–33 (EPPKDSPAEERGPASKEVS) and 78–95 (GSCKDGSDLLVKRQRDSP). Over residues 337–357 (TGTSSDGAGTKTTPTKFSSKL) the composition is skewed to polar residues. Low complexity predominate over residues 394–403 (DKVSSSPKVK). The span at 404–416 (GSGRRVGRKRNKN) shows a compositional bias: basic residues. A compositionally biased stretch (low complexity) spans 438–449 (SDSIASGSCSPS). A compositionally biased stretch (polar residues) spans 459-473 (ATSSSQKHVKSGNSG). Positions 531–581 (TNKLWRPLEKSLFDKGVEIFGMNSCLIARNLLSGFKSCWEVFQYMTCSENK) constitute an SANT domain. A CXC domain is found at 638-737 (RKRITEKKDQ…SLGVPSQRGD (100 aa)). Positions 752–867 (QRVLLGISDV…AGEELFYDYR (116 aa)) constitute an SET domain. Y866 provides a ligand contact to S-adenosyl-L-methionine. Residues 875-890 (AWAKKPEAPGSKKDEN) are compositionally biased toward basic and acidic residues. A disordered region spans residues 875–902 (AWAKKPEAPGSKKDENVTPSVGRPKKLA).

This sequence belongs to the class V-like SAM-binding methyltransferase superfamily. Histone-lysine methyltransferase family. EZ subfamily. Probable component of a PcG complex. In plants, PcG complexes are probably composed of a member of the EZ family (CLF or MEA), FIE, and a member of the VEFS family (FIS2, VRN2 or EMF2). Interacts with FIE. Interacts with RING1A. Binds to ALP1. Interacts with BLI. Binds to ATX1 in the nucleus. Interacts with EOL1. Interacts (via SANT domain) with HXK1 in the nucleus. Strongly expressed throughout the apical meristem, leaf primordia, and leaves of 7-8 day-old seedling. Weakly expressed in the vasculature of hypocotyl. Strongly expressed throughout the young stages 1 and 2 floral meristems that arose on the flanks of the apex. In stage 3 and 4 flowers, it is expressed in the emerging sepal primordia and in the dome of the floral meristem. During stages 6 and 7, it is strongly expressed in developing petal and stamen, and weakly expressed in the sepals. Late in floral development, at stage 12, it is weakly expressed in all floral whorls, and expressed at intermediate level in petals and ovules.

Its subcellular location is the nucleus. It carries out the reaction L-lysyl-[histone] + S-adenosyl-L-methionine = N(6)-methyl-L-lysyl-[histone] + S-adenosyl-L-homocysteine + H(+). Polycomb group (PcG) protein. Catalytic subunit of some PcG multiprotein complex, which methylates 'Lys-27' of histone H3, leading to transcriptional repression of the affected target genes, mainly abscisic acid (ABA) responsive elements. Required to regulate floral development by repressing the AGAMOUS homeotic gene in leaves, inflorescence stems and flowers. Together with ATX1, modulates AG nucleosome methylation statement. Regulates the antero-posterior organization of the endosperm, as well as the division and elongation rates of leaf cells. PcG proteins act by forming multiprotein complexes, which are required to maintain the transcriptionally repressive state of homeotic genes throughout development. PcG proteins are not required to initiate repression, but to maintain it during later stages of development. Forms a nuclear complex with EZA1/SWN and HXK1 to target common glucose-responsive genes and regulate glucose signaling by glucose-mediated gene repression. Affects the recruitment of HXK1 to the target chromatin. The chain is Histone-lysine N-methyltransferase CLF from Arabidopsis thaliana (Mouse-ear cress).